A 279-amino-acid polypeptide reads, in one-letter code: NAD kinase (279 aa).

The active-site Proton acceptor is Asp61. Residues 61 to 62 (DG), 138 to 139 (ND), Lys149, Lys166, Asp168, and 179 to 184 (TGYSFS) contribute to the NAD(+) site.

The protein belongs to the NAD kinase family. Requires a divalent metal cation as cofactor.

The protein localises to the cytoplasm. It catalyses the reaction NAD(+) + ATP = ADP + NADP(+) + H(+). In terms of biological role, involved in the regulation of the intracellular balance of NAD and NADP, and is a key enzyme in the biosynthesis of NADP. Catalyzes specifically the phosphorylation on 2'-hydroxyl of the adenosine moiety of NAD to yield NADP. This chain is NAD kinase, found in Borreliella burgdorferi (strain ATCC 35210 / DSM 4680 / CIP 102532 / B31) (Borrelia burgdorferi).